The sequence spans 494 residues: Truncated non-functional calcium-binding mitochondrial carrier SAL1-1 (494 aa).

One can recognise an EF-hand 1 domain in the interval 11 to 46 (QRDIRYACLFKELDVKGNGQVTLDNLISAFEKNDHP). Residues Lys-65, Asp-70, Asp-93, Asp-95, Asp-97, Lys-99, and Glu-104 each contribute to the Ca(2+) site. EF-hand domains follow at residues 80–115 (NAESQIWNGFQRIDLDHDGKIGINEINRYLSDLDNQ), 120–155 (NELNHELSNEKVNKFSRFFEWAFPKRKANIALRGQA), and 156–191 (SHKKNTDNDRSKKTTDSDLYVTYDQWRDFLLLVPRK). Positions 161 and 166 each coordinate Ca(2+). Solcar repeat units follow at residues 225–332 (IRGF…TKKI) and 345–434 (LSKF…LKKM). Helical transmembrane passes span 231-248 (FIAGGISGVISRTCTAPF), 307-326 (GNGLNVIKVFPESSIKFGSF), 355-368 (GLAGMAAQFSVYPI), 409-428 (RCHSRYSGHISLCCIRFGDF), and 458-475 (TSNGCIQWNCRSFCCLSN). A Solcar 3; truncated repeat occupies 452–494 (SKQPGCTSNGCIQWNCRSFCCLSNQSFKNKTTSPRNICTSLCV).

It belongs to the mitochondrial carrier (TC 2.A.29) family.

It localises to the mitochondrion inner membrane. Calcium-dependent mitochondrial solute carrier. This chain is Truncated non-functional calcium-binding mitochondrial carrier SAL1-1 (SAL1), found in Saccharomyces cerevisiae (strain ATCC 204508 / S288c) (Baker's yeast).